Reading from the N-terminus, the 2167-residue chain is GTPase-activating protein BEM2/IPL2 (2167 aa).

Disordered regions lie at residues 1-209 (MKGL…NDNE), 243-305 (TNYN…ASAR), and 353-372 (NSSIANENHQQKKQQTNNQA). Residues 12-51 (SSTASASSSSTSTSHKTTTASTASSSSPSSSSQTIRNSTS) show a composition bias toward low complexity. A Glycyl lysine isopeptide (Lys-Gly) (interchain with G-Cter in ubiquitin) cross-link involves residue K27. Over residues 58–70 (HSHHHHGQGHSHH) the composition is skewed to basic residues. Residues 89–118 (KQYTSTSSSQVNLGMYHSDTNTRSSRSIAS) are compositionally biased toward polar residues. Phosphoserine is present on S129. The span at 134–145 (SNSSSQKSNAQD) shows a compositional bias: polar residues. 2 stretches are compositionally biased toward low complexity: residues 160-177 (SLLPSRSSSLSPPQSRCS) and 187-207 (NTSGISNSSGTNNNNSNNNND). Residues 243–252 (TNYNSSMTAP) show a composition bias toward polar residues. The residue at position 283 (S283) is a Phosphoserine. Residues 289–300 (SSSTTATNSGND) show a composition bias toward low complexity. A Ras-GEF domain is found at 592–859 (DITTLADEVH…MKLSVQHEPP (268 aa)). S1012 and S1016 each carry phosphoserine. The residue at position 1038 (T1038) is a Phosphothreonine. S1046, S1054, and S1128 each carry phosphoserine. Residues 1771 to 1794 (ISGTHSDNDHSYNINKNTGQTPSL) are compositionally biased toward polar residues. Residues 1771–1828 (ISGTHSDNDHSYNINKNTGQTPSLGSVMESNNSARNRRDSRASFSTNRSSVVSNSSHN) are disordered. A compositionally biased stretch (low complexity) spans 1812 to 1828 (ASFSTNRSSVVSNSSHN). A PH domain is found at 1846 to 1948 (GFNTSSSNYS…WIKMIKASKR (103 aa)). Residues 1967-2165 (VPLEDVCERE…DFIKNPNDYF (199 aa)) form the Rho-GAP domain.

Functionally, GTPase-activating protein (GAP) for RHO1 and RHO2. Involved in the control of cellular morphogenesis. Required for proper bud site selection and bud emergence. This Saccharomyces cerevisiae (strain ATCC 204508 / S288c) (Baker's yeast) protein is GTPase-activating protein BEM2/IPL2 (BEM2).